Reading from the N-terminus, the 399-residue chain is MSTKDFIEKDYYKVLGVPKDATEAEIKKAYRKLARENHPDANKGNVKAEERFKEISEANDILGDPKKRKEYDEARALFGNGGFRPGPGAGGGGTFNFDLGDLFGGGAQGGGGQGGAGGFGGGLGDVFGGLFNRTGGGPGTGTRTQPRRGQDIESEVTLSFTEAIEGATVPLRMSSQAPCKACSGTGDKNGTPRVCPTCVGTGQVARGSGGGFSLTDPCPDCKGRGLIAEDPCEVCKGSGRAKSSRTMQVRIPAGVSDGQRIRLRGKGTPGERGGPAGDLYVVVHVKEHPVFGRRGDNLTVTVPVTYAEAALGGEVRVPTLGGPSVTLKLPAGTPNGRTMRARGKGAVRKDGTRGDLLVTVEVSVPKDLTGKARDALQAYREATADEDPRAELFQAAKGA.

One can recognise a J domain in the interval 10–75; sequence DYYKVLGVPK…KKRKEYDEAR (66 aa). The CR-type zinc-finger motif lies at 166-244; the sequence is GATVPLRMSS…CKGSGRAKSS (79 aa). Cysteine 179, cysteine 182, cysteine 195, cysteine 198, cysteine 218, cysteine 221, cysteine 232, and cysteine 235 together coordinate Zn(2+). CXXCXGXG motif repeat units follow at residues 179-186, 195-202, 218-225, and 232-239; these read CKACSGTG, CPTCVGTG, CPDCKGRG, and CEVCKGSG.

It belongs to the DnaJ family. As to quaternary structure, homodimer. Requires Zn(2+) as cofactor.

The protein resides in the cytoplasm. Its function is as follows. Participates actively in the response to hyperosmotic and heat shock by preventing the aggregation of stress-denatured proteins and by disaggregating proteins, also in an autonomous, DnaK-independent fashion. Unfolded proteins bind initially to DnaJ; upon interaction with the DnaJ-bound protein, DnaK hydrolyzes its bound ATP, resulting in the formation of a stable complex. GrpE releases ADP from DnaK; ATP binding to DnaK triggers the release of the substrate protein, thus completing the reaction cycle. Several rounds of ATP-dependent interactions between DnaJ, DnaK and GrpE are required for fully efficient folding. Also involved, together with DnaK and GrpE, in the DNA replication of plasmids through activation of initiation proteins. The sequence is that of Chaperone protein DnaJ 1 from Streptomyces coelicolor (strain ATCC BAA-471 / A3(2) / M145).